A 405-amino-acid chain; its full sequence is Putative phosphate permease PYRAB14010 (405 aa).

The next 11 membrane-spanning stretches (helical) occupy residues 3-23 (MDPWLLLTLILGLAMAWAIGA), 44-64 (AVLIAGILEFTGAYFFGKTVT), 82-102 (VLVYGSLAALLGATIWLVIAT), 114-134 (IIGGIVGYGVVYAGLEIVNWG), 138-158 (SVVLSWILSPIVGAIFAFFIF), 181-201 (VWIGLAFVVIGTMFYIKVLHG), 207-227 (GVLKLGIPVGLVVFLITSMIL), 264-284 (VANAIGPVAAVYTIATMGMAG), 287-307 (VPVPRWILALGGLGIAIGVAT), 329-349 (FTIDFSAATVVLIASWLGMPI), and 384-404 (FVTVPVAGLISAIIFKILWIV).

The protein belongs to the inorganic phosphate transporter (PiT) (TC 2.A.20) family.

The protein localises to the cell membrane. Functionally, potential transporter for phosphate. The polypeptide is Putative phosphate permease PYRAB14010 (Pyrococcus abyssi (strain GE5 / Orsay)).